We begin with the raw amino-acid sequence, 177 residues long: Large ribosomal subunit protein uL6 (177 aa).

The protein belongs to the universal ribosomal protein uL6 family. As to quaternary structure, part of the 50S ribosomal subunit.

Functionally, this protein binds to the 23S rRNA, and is important in its secondary structure. It is located near the subunit interface in the base of the L7/L12 stalk, and near the tRNA binding site of the peptidyltransferase center. In Cellvibrio japonicus (strain Ueda107) (Pseudomonas fluorescens subsp. cellulosa), this protein is Large ribosomal subunit protein uL6.